The sequence spans 1533 residues: Actin cytoskeleton-regulatory complex protein pan-1 (1533 aa).

Residues 1 to 204 are disordered; that stretch reads MYSNSNAFLG…PPPPVKPQAT (204 aa). 4 stretches are compositionally biased toward low complexity: residues 19–46, 53–136, 143–170, and 177–193; these read QQPQ…QPTG, GFAP…FQTG, IPQQ…QPQP, and QIQA…QGGI. Residues 244–333 form the EH 1 domain; the sequence is DQARFETLFK…DHIKNEVSSM (90 aa). Positions 277-312 constitute an EF-hand 1 domain; that stretch reads LDGDSLSQIWTLADTTRSGQLHFPEFALAMYLCNLK. The segment covering 345-359 has biased composition (low complexity); that stretch reads AGSSSAPASNAPSFA. 2 disordered regions span residues 345-378 and 393-423; these read AGSS…PQPS and QQTG…GYAG. Polar residues-rich tracts occupy residues 360–378 and 393–410; these read TQQN…PQPS and QQTG…QQTG. Residues 513 to 602 enclose the EH 2 domain; that stretch reads EKTRYDALFR…PELVPPSARN (90 aa). An EF-hand 2 domain is found at 546-581; that stretch reads LDKPDLERIWTLADNGNKGRLDLDEFAVAMHLIYRK. Basic and acidic residues predominate over residues 649 to 664; that stretch reads NRKDATVFKNNDEEVG. 4 disordered regions span residues 649–691, 894–917, 935–1306, and 1334–1533; these read NRKD…GDDL, IEDS…WEDA, SRAA…STNP, and DAIS…RVLD. A coiled-coil region spans residues 690 to 890; that stretch reads DLTIEQLRKK…RDVEDSVREF (201 aa). Composition is skewed to basic and acidic residues over residues 894 to 916 and 935 to 947; these read IEDS…RWED and SRAA…DRQG. Low complexity predominate over residues 968-982; that stretch reads TPSPSISRTSTPAST. Positions 1026-1209 form a coiled coil; that stretch reads ETAAQRAERE…KQLEAIDDED (184 aa). Composition is skewed to basic and acidic residues over residues 1031–1063, 1090–1164, and 1173–1203; these read RAER…KLAE, GKAD…EEEK, and EAKE…KQLE. A compositionally biased stretch (acidic residues) spans 1204-1218; that stretch reads AIDDEDSSSSDEEGP. The span at 1221–1237 shows a compositional bias: polar residues; the sequence is ITPQASTPTVGGSQVGT. Low complexity predominate over residues 1279 to 1293; the sequence is SQSSEASTSSVAAPV. Acidic residues predominate over residues 1348-1367; the sequence is DDDDDDWGSEKGSDDEDSDD. Pro residues predominate over residues 1412–1495; the sequence is SSPPPPPAPV…PPPGGAPAPS (84 aa). The region spanning 1500-1517 is the WH2 domain; it reads RPAGLLGEIQAGRALKKT.

It belongs to the PAN1 family. Component of the PAN1 actin cytoskeleton-regulatory complex.

It localises to the cell membrane. Its subcellular location is the endosome membrane. The protein localises to the cytoplasm. It is found in the cytoskeleton. The protein resides in the actin patch. Component of the PAN1 actin cytoskeleton-regulatory complex required for the internalization of endosomes during actin-coupled endocytosis. The complex links the site of endocytosis to the cell membrane-associated actin cytoskeleton. Mediates uptake of external molecules and vacuolar degradation of plasma membrane proteins. Plays a role in the proper organization of the cell membrane-associated actin cytoskeleton and promotes its destabilization. The sequence is that of Actin cytoskeleton-regulatory complex protein pan-1 (pan-1) from Neurospora crassa (strain ATCC 24698 / 74-OR23-1A / CBS 708.71 / DSM 1257 / FGSC 987).